A 285-amino-acid chain; its full sequence is Thrombin-like enzyme TLBm (285 aa).

Residues 1–273 (VIGGDECNIN…HLDWSQSVIA (273 aa)) form the Peptidase S1 domain. Intrachain disulfides connect C7-C181, C30-C46, C94-C284, C156-C234, C192-C209, and C224-C249. Residues H45 and D113 each act as charge relay system in the active site. The active-site Charge relay system is the S228.

Belongs to the peptidase S1 family. Snake venom subfamily. As to quaternary structure, monomer. Homologous thrombin-like enzymes are N-glycosylated. This enzyme does not contain the consensus glycosylation sites, suggesting it is not glycosylated. Expressed by the venom gland.

It localises to the secreted. Inhibited by PMSF, disodium-EDTA, S(Dm) and soybean trypsin inhibitor (SBTI). SBTI and S(Dm) (the anti-hemorrhagic protein) acts as a non-competitive inhibitors that decrease the enzymatic activity. Functionally, thrombin-like enzyme that induces the formation of fibrin clot. Cleaves the Aalpha-chain of fibrinogen (FGA) with higher activity than the Bbeta-chain (FGB). Induces platelet aggregation in both platelet-rich plasma and in washed platelet preparations. This aggregation is strongly inhibited by preincubation of the enzyme with PMSF. The sequence is that of Thrombin-like enzyme TLBm from Bothrops marajoensis (Marajo lancehead).